The following is a 344-amino-acid chain: Phenylalanine--tRNA ligase alpha subunit (344 aa).

Glu259 is a binding site for Mg(2+).

The protein belongs to the class-II aminoacyl-tRNA synthetase family. Phe-tRNA synthetase alpha subunit type 1 subfamily. In terms of assembly, tetramer of two alpha and two beta subunits. The cofactor is Mg(2+).

It localises to the cytoplasm. The enzyme catalyses tRNA(Phe) + L-phenylalanine + ATP = L-phenylalanyl-tRNA(Phe) + AMP + diphosphate + H(+). The sequence is that of Phenylalanine--tRNA ligase alpha subunit from Petrotoga mobilis (strain DSM 10674 / SJ95).